Reading from the N-terminus, the 98-residue chain is NADH-ubiquinone oxidoreductase chain 4L (98 aa).

3 helical membrane passes run 1–21 (MSLT…GLLM), 29–49 (SLLC…VIIL), and 61–81 (IILL…LVMV).

This sequence belongs to the complex I subunit 4L family. In terms of assembly, core subunit of respiratory chain NADH dehydrogenase (Complex I) which is composed of 45 different subunits.

The protein resides in the mitochondrion inner membrane. It carries out the reaction a ubiquinone + NADH + 5 H(+)(in) = a ubiquinol + NAD(+) + 4 H(+)(out). Functionally, core subunit of the mitochondrial membrane respiratory chain NADH dehydrogenase (Complex I) which catalyzes electron transfer from NADH through the respiratory chain, using ubiquinone as an electron acceptor. Part of the enzyme membrane arm which is embedded in the lipid bilayer and involved in proton translocation. In Uroderma bilobatum (Tent-making bat), this protein is NADH-ubiquinone oxidoreductase chain 4L (MT-ND4L).